We begin with the raw amino-acid sequence, 102 residues long: Small ribosomal subunit protein uS10 (102 aa).

This sequence belongs to the universal ribosomal protein uS10 family. Part of the 30S ribosomal subunit.

In terms of biological role, involved in the binding of tRNA to the ribosomes. The protein is Small ribosomal subunit protein uS10 of Carboxydothermus hydrogenoformans (strain ATCC BAA-161 / DSM 6008 / Z-2901).